Here is a 413-residue protein sequence, read N- to C-terminus: N5-carboxyaminoimidazole ribonucleotide synthase (413 aa).

Residues 1-21 (MKRVSEQAGNPDGNPQAHVPG) are disordered. ATP-binding positions include lysine 122, lysine 162, 199-202 (EEKV), glutamate 207, and 289-290 (NE). In terms of domain architecture, ATP-grasp spans 126–319 (RERLAELGAP…QFEQHLRAVM (194 aa)).

It belongs to the PurK/PurT family. Homodimer.

It carries out the reaction 5-amino-1-(5-phospho-beta-D-ribosyl)imidazole + hydrogencarbonate + ATP = 5-carboxyamino-1-(5-phospho-D-ribosyl)imidazole + ADP + phosphate + 2 H(+). It functions in the pathway purine metabolism; IMP biosynthesis via de novo pathway; 5-amino-1-(5-phospho-D-ribosyl)imidazole-4-carboxylate from 5-amino-1-(5-phospho-D-ribosyl)imidazole (N5-CAIR route): step 1/2. Catalyzes the ATP-dependent conversion of 5-aminoimidazole ribonucleotide (AIR) and HCO(3)(-) to N5-carboxyaminoimidazole ribonucleotide (N5-CAIR). This Corynebacterium ammoniagenes (Brevibacterium ammoniagenes) protein is N5-carboxyaminoimidazole ribonucleotide synthase.